We begin with the raw amino-acid sequence, 702 residues long: Polyribonucleotide nucleotidyltransferase (702 aa).

2 residues coordinate Mg(2+): Asp-487 and Asp-493. Residues 554–613 (PRLLTIKIHPDKIREVIGKGGSTIQAITKETGTQIDIQDDGTIVIASVNAIAAQAAKARI) form the KH domain. The region spanning 623–691 (GRIYEGKVAK…KQGRIRLSMK (69 aa)) is the S1 motif domain.

It belongs to the polyribonucleotide nucleotidyltransferase family. As to quaternary structure, component of the RNA degradosome, which is a multiprotein complex involved in RNA processing and mRNA degradation. Requires Mg(2+) as cofactor.

The protein localises to the cytoplasm. The catalysed reaction is RNA(n+1) + phosphate = RNA(n) + a ribonucleoside 5'-diphosphate. Involved in mRNA degradation. Catalyzes the phosphorolysis of single-stranded polyribonucleotides processively in the 3'- to 5'-direction. The chain is Polyribonucleotide nucleotidyltransferase from Stenotrophomonas maltophilia (strain K279a).